The chain runs to 894 residues: Protein SEY1 homolog (894 aa).

Composition is skewed to low complexity over residues 1–10 (MSEEITTNQT) and 36–48 (VQEQ…QEQQ). The interval 1-97 (MSEEITTNQT…QKQQTQEQEH (97 aa)) is disordered. Residues 1–800 (MSEEITTNQT…EQNRLTSGGG (800 aa)) are Cytoplasmic-facing. Residues 21-60 (RLSNENIKQEDEEQQVQEQQEQQQQEQQEQIDDQDTQQQE) adopt a coiled-coil conformation. Positions 49–65 (EQIDDQDTQQQEDEFVV) are enriched in acidic residues. Over residues 78–93 (TPTLQETPQQQKQQTQ) the composition is skewed to low complexity. Positions 138–361 (GFDYSVISIL…ADSFIPKRKY (224 aa)) constitute a GB1/RHD3-type G domain. Position 148–155 (148–155 (GPQSSGKS)) interacts with GTP. The helical transmembrane segment at 801–821 (VPGYMIILLCVLGFNEFISII) threads the bilayer. Over 822 to 824 (SSP) the chain is Lumenal. The helical transmembrane segment at 825 to 845 (LLLLLTILLGGVGFVLFKLGL) threads the bilayer. The Cytoplasmic segment spans residues 846-894 (AGPFIDYSSQILVHFISKVKDIVLHVEQLQEQNHNNNNNNNNTPKQKRE).

This sequence belongs to the TRAFAC class dynamin-like GTPase superfamily. GB1/RHD3 GTPase family. RHD3 subfamily.

Its subcellular location is the endoplasmic reticulum membrane. In terms of biological role, probable GTP-binding protein that may be involved in cell development. This is Protein SEY1 homolog from Dictyostelium discoideum (Social amoeba).